The chain runs to 84 residues: Putative pelota-like protein YCL001W-B (84 aa).

It belongs to the eukaryotic release factor 1 family. Pelota subfamily. Highly divergent.

This Saccharomyces cerevisiae (strain ATCC 204508 / S288c) (Baker's yeast) protein is Putative pelota-like protein YCL001W-B.